The chain runs to 72 residues: Cell division protein ZapB (72 aa).

Residues 1–72 (MSSEILDQLE…RSLLGQIDNV (72 aa)) are a coiled coil.

It belongs to the ZapB family. As to quaternary structure, homodimer. The ends of the coiled-coil dimer bind to each other, forming polymers. Interacts with FtsZ.

The protein resides in the cytoplasm. Non-essential, abundant cell division factor that is required for proper Z-ring formation. It is recruited early to the divisome by direct interaction with FtsZ, stimulating Z-ring assembly and thereby promoting cell division earlier in the cell cycle. Its recruitment to the Z-ring requires functional FtsA or ZipA. The protein is Cell division protein ZapB of Actinobacillus succinogenes (strain ATCC 55618 / DSM 22257 / CCUG 43843 / 130Z).